Here is a 421-residue protein sequence, read N- to C-terminus: 4-hydroxy-3-methylbut-2-en-1-yl diphosphate synthase (flavodoxin) (421 aa).

Residues 1-20 (MHDAVTRPTPPSDATSWPRR) are disordered. Positions 311, 314, 357, and 364 each coordinate [4Fe-4S] cluster.

The protein belongs to the IspG family. Requires [4Fe-4S] cluster as cofactor.

It carries out the reaction (2E)-4-hydroxy-3-methylbut-2-enyl diphosphate + oxidized [flavodoxin] + H2O + 2 H(+) = 2-C-methyl-D-erythritol 2,4-cyclic diphosphate + reduced [flavodoxin]. Its pathway is isoprenoid biosynthesis; isopentenyl diphosphate biosynthesis via DXP pathway; isopentenyl diphosphate from 1-deoxy-D-xylulose 5-phosphate: step 5/6. Functionally, converts 2C-methyl-D-erythritol 2,4-cyclodiphosphate (ME-2,4cPP) into 1-hydroxy-2-methyl-2-(E)-butenyl 4-diphosphate. The polypeptide is 4-hydroxy-3-methylbut-2-en-1-yl diphosphate synthase (flavodoxin) (Stenotrophomonas maltophilia (strain R551-3)).